A 409-amino-acid polypeptide reads, in one-letter code: PPE family protein PPE32 (409 aa).

It belongs to the mycobacterial PPE family. Interacts with host Toll-like receptor 2 (TLR2).

The protein resides in the secreted. The protein localises to the cell wall. Its subcellular location is the cell surface. Functionally, virulence factor that modulates the production of host cytokines. This Mycobacterium tuberculosis (strain CDC 1551 / Oshkosh) protein is PPE family protein PPE32.